Reading from the N-terminus, the 637-residue chain is Probable membrane transporter protein MamO (637 aa).

Residues 1–24 (MIEVGETMGELPTNKIVFCERSWK) lie on the Cytoplasmic side of the membrane. Residues 25–45 (TPVSILAFLIFVTFAWGIYLL) form a helical membrane-spanning segment. Residues 46-352 (DHYDEDDNFH…AKIGGYSVAD (307 aa)) lie on the Lumenal side of the membrane. The tract at residues 78 to 268 (LYHTVPPAVV…VIVSHLQDVV (191 aa)) is protease-like. Residues His148 and His263 each coordinate a divalent metal cation. A helical membrane pass occupies residues 353-373 (IVGLVMLALAAGVTGGMMTMG). Residues 370–637 (MTMGGGVLQV…AIALKMLTSV (268 aa)) are TSUP-like. Over 374 to 378 (GGVLQ) the chain is Cytoplasmic. A helical transmembrane segment spans residues 379 to 399 (VAGMMVFFGYGMYLIRPVVFL). At 400-416 (TNVVVYGAASLRNDKAQ) the chain is on the lumenal side. A helical membrane pass occupies residues 417–437 (LVQWDKVKPLIPWGIAGVILG). Residue Tyr438 is a topological domain, cytoplasmic. A helical transmembrane segment spans residues 439 to 459 (FIGNAIGDSVVGILLGLFALI). Residues 460-517 (MAGKAVMEILQPNAGEETAESISATEAEDEMDELMALADGTSRPKASGLALPEGHARS) lie on the Lumenal side of the membrane. The chain crosses the membrane as a helical span at residues 518–538 (AVLGLPMGLFSGILGISGGVI). The Cytoplasmic segment spans residues 539–554 (EVPLQRYVGRISLQNA). A helical membrane pass occupies residues 555 to 575 (IANSSVLVFWASVAGSVVAFL). Topologically, residues 576–586 (HGSSTGLIHWE) are lumenal. Residues 587–607 (APVTLALVMIPGAYVGGIIGA) form a helical membrane-spanning segment. Residues 608–616 (RLMRVLPVR) lie on the Cytoplasmic side of the membrane. A helical membrane pass occupies residues 617-637 (VLKGVYAATMAAIALKMLTSV).

This sequence in the N-terminal section; belongs to the peptidase S1C family. The protein in the C-terminal section; belongs to the 4-toluene sulfonate uptake permease (TSUP) (TC 2.A.102) family. It depends on a metal cation as a cofactor. In terms of processing, subject to proteolytic cleavage by MamE.

The protein resides in the magnetosome membrane. In terms of biological role, plays 2 roles; promotes magnetite nucleation/formation and activates the MamE protease. Despite its near conservation of a protease-like sequence, this is probably not a protease. Required in conjunction with MamP for proteolysis of at least MamE, itself and MamP. May transport a solute that controls MamE's protease activity. May place individual iron atoms into the magnetite lattice. This is Probable membrane transporter protein MamO (mamO) from Paramagnetospirillum magneticum (strain ATCC 700264 / AMB-1) (Magnetospirillum magneticum).